We begin with the raw amino-acid sequence, 456 residues long: Adenylosuccinate lyase (456 aa).

Residues 15-16, 90-92, and 122-123 each bind N(6)-(1,2-dicarboxyethyl)-AMP; these read RY, NHD, and TS. Histidine 171 (proton donor/acceptor) is an active-site residue. Glutamine 247 is a N(6)-(1,2-dicarboxyethyl)-AMP binding site. Serine 295 (proton donor/acceptor) is an active-site residue. N(6)-(1,2-dicarboxyethyl)-AMP contacts are provided by residues serine 296, 301 to 303, asparagine 309, arginine 335, and 340 to 344; these read KVN and STVLR.

It belongs to the lyase 1 family. Adenylosuccinate lyase subfamily. Homotetramer. Residues from neighboring subunits contribute catalytic and substrate-binding residues to each active site.

The enzyme catalyses N(6)-(1,2-dicarboxyethyl)-AMP = fumarate + AMP. It catalyses the reaction (2S)-2-[5-amino-1-(5-phospho-beta-D-ribosyl)imidazole-4-carboxamido]succinate = 5-amino-1-(5-phospho-beta-D-ribosyl)imidazole-4-carboxamide + fumarate. The protein operates within purine metabolism; AMP biosynthesis via de novo pathway; AMP from IMP: step 2/2. Its pathway is purine metabolism; IMP biosynthesis via de novo pathway; 5-amino-1-(5-phospho-D-ribosyl)imidazole-4-carboxamide from 5-amino-1-(5-phospho-D-ribosyl)imidazole-4-carboxylate: step 2/2. Catalyzes two reactions in de novo purine nucleotide biosynthesis. Catalyzes the breakdown of 5-aminoimidazole- (N-succinylocarboxamide) ribotide (SAICAR or 2-[5-amino-1-(5-phospho-beta-D-ribosyl)imidazole-4-carboxamido]succinate) to 5-aminoimidazole-4-carboxamide ribotide (AICAR or 5-amino-1-(5-phospho-beta-D-ribosyl)imidazole-4-carboxamide) and fumarate, and of adenylosuccinate (ADS or N(6)-(1,2-dicarboxyethyl)-AMP) to adenosine monophosphate (AMP) and fumarate. This chain is Adenylosuccinate lyase (purB), found in Buchnera aphidicola subsp. Acyrthosiphon pisum (strain APS) (Acyrthosiphon pisum symbiotic bacterium).